A 184-amino-acid polypeptide reads, in one-letter code: Ribosome maturation factor RimM (184 aa).

The 79-residue stretch at 106–184 folds into the PRC barrel domain; it reads PGDYYWYQLE…RMIVDWDPEF (79 aa).

It belongs to the RimM family. In terms of assembly, binds ribosomal protein uS19.

The protein localises to the cytoplasm. Functionally, an accessory protein needed during the final step in the assembly of 30S ribosomal subunit, possibly for assembly of the head region. Essential for efficient processing of 16S rRNA. May be needed both before and after RbfA during the maturation of 16S rRNA. It has affinity for free ribosomal 30S subunits but not for 70S ribosomes. This is Ribosome maturation factor RimM from Chromohalobacter salexigens (strain ATCC BAA-138 / DSM 3043 / CIP 106854 / NCIMB 13768 / 1H11).